The primary structure comprises 147 residues: Hemoglobin subunit beta (147 aa).

The residue at position 2 (valine 2) is an N-acetylvaline. Positions 3–147 (HLTPEEKNAV…VANALAHKYH (145 aa)) constitute a Globin domain. Residue threonine 13 is modified to Phosphothreonine. Serine 45 bears the Phosphoserine mark. Lysine 60 is modified (N6-acetyllysine). Heme b is bound at residue histidine 64. Lysine 83 is modified (N6-acetyllysine). Histidine 93 serves as a coordination point for heme b. Position 94 is an S-nitrosocysteine (cysteine 94). Position 145 is an N6-acetyllysine (lysine 145).

The protein belongs to the globin family. As to quaternary structure, heterotetramer of two alpha chains and two beta chains. As to expression, red blood cells.

Functionally, involved in oxygen transport from the lung to the various peripheral tissues. In Macaca fascicularis (Crab-eating macaque), this protein is Hemoglobin subunit beta (HBB).